The following is a 399-amino-acid chain: Fructose-1,6-bisphosphate aldolase/phosphatase (399 aa).

Aspartate 11 acts as the Proton acceptor; for FBP phosphatase activity in catalysis. Mg(2+) is bound by residues aspartate 11, histidine 18, aspartate 52, and aspartate 53. Histidine 18 serves as a coordination point for beta-D-fructose 1,6-bisphosphate. Histidine 18 serves as a coordination point for dihydroxyacetone phosphate. Tyrosine 91 provides a ligand contact to beta-D-fructose 1,6-bisphosphate. Position 95 (glutamine 95) interacts with Mg(2+). A beta-D-fructose 1,6-bisphosphate-binding site is contributed by 104 to 105; it reads GN. Residue aspartate 132 coordinates Mg(2+). Residue lysine 133 participates in beta-D-fructose 1,6-bisphosphate binding. Residue lysine 133 participates in dihydroxyacetone phosphate binding. Tyrosine 229 acts as the Proton donor/acceptor; for FBP aldolase activity in catalysis. Mg(2+) is bound by residues lysine 232, aspartate 233, and aspartate 234. Lysine 232 acts as the Schiff-base intermediate with DHAP; for FBP aldolase activity in catalysis. Beta-D-fructose 1,6-bisphosphate contacts are provided by residues 242-243, arginine 266, aspartate 297, and tyrosine 358; that span reads QS. Dihydroxyacetone phosphate contacts are provided by arginine 266 and aspartate 297.

This sequence belongs to the FBP aldolase/phosphatase family. Homooctamer; dimer of tetramers. The cofactor is Mg(2+).

The enzyme catalyses beta-D-fructose 1,6-bisphosphate + H2O = beta-D-fructose 6-phosphate + phosphate. The catalysed reaction is beta-D-fructose 1,6-bisphosphate = D-glyceraldehyde 3-phosphate + dihydroxyacetone phosphate. It participates in carbohydrate biosynthesis; gluconeogenesis. Catalyzes two subsequent steps in gluconeogenesis: the aldol condensation of dihydroxyacetone phosphate (DHAP) and glyceraldehyde-3-phosphate (GA3P) to fructose-1,6-bisphosphate (FBP), and the dephosphorylation of FBP to fructose-6-phosphate (F6P). The sequence is that of Fructose-1,6-bisphosphate aldolase/phosphatase from Pyrobaculum neutrophilum (strain DSM 2338 / JCM 9278 / NBRC 100436 / V24Sta) (Thermoproteus neutrophilus).